The chain runs to 434 residues: Histidinol dehydrogenase (434 aa).

NAD(+) contacts are provided by Tyr130, Gln188, and Asn211. Substrate is bound by residues Ser237, Gln259, and His262. Zn(2+) is bound by residues Gln259 and His262. Residues Glu326 and His327 each act as proton acceptor in the active site. Substrate-binding residues include His327, Asp360, Glu414, and His419. Residue Asp360 coordinates Zn(2+). His419 lines the Zn(2+) pocket.

Belongs to the histidinol dehydrogenase family. As to quaternary structure, homodimer. Zn(2+) serves as cofactor.

It carries out the reaction L-histidinol + 2 NAD(+) + H2O = L-histidine + 2 NADH + 3 H(+). It participates in amino-acid biosynthesis; L-histidine biosynthesis; L-histidine from 5-phospho-alpha-D-ribose 1-diphosphate: step 9/9. Catalyzes the sequential NAD-dependent oxidations of L-histidinol to L-histidinaldehyde and then to L-histidine. The sequence is that of Histidinol dehydrogenase from Salmonella paratyphi A (strain ATCC 9150 / SARB42).